We begin with the raw amino-acid sequence, 344 residues long: Geranylgeranyl pyrophosphate synthase 10, mitochondrial (344 aa).

A mitochondrion-targeting transit peptide spans 1–40 (MENREVFVYIVISIFRSLQFLFWRFRPRYNDVTSALTRPL). Isopentenyl diphosphate-binding residues include K91, R94, and H123. 2 residues coordinate Mg(2+): D130 and D136. Position 141 (R141) interacts with dimethylallyl diphosphate. An isopentenyl diphosphate-binding site is contributed by R142. 5 residues coordinate dimethylallyl diphosphate: K229, T230, Q267, K284, and K294.

This sequence belongs to the FPP/GGPP synthase family. In terms of assembly, monomer. The cofactor is Mg(2+).

The protein resides in the mitochondrion. It carries out the reaction isopentenyl diphosphate + dimethylallyl diphosphate = (2E)-geranyl diphosphate + diphosphate. It catalyses the reaction isopentenyl diphosphate + (2E)-geranyl diphosphate = (2E,6E)-farnesyl diphosphate + diphosphate. The catalysed reaction is isopentenyl diphosphate + (2E,6E)-farnesyl diphosphate = (2E,6E,10E)-geranylgeranyl diphosphate + diphosphate. The protein operates within isoprenoid biosynthesis; farnesyl diphosphate biosynthesis; farnesyl diphosphate from geranyl diphosphate and isopentenyl diphosphate: step 1/1. It participates in isoprenoid biosynthesis; geranyl diphosphate biosynthesis; geranyl diphosphate from dimethylallyl diphosphate and isopentenyl diphosphate: step 1/1. It functions in the pathway isoprenoid biosynthesis; geranylgeranyl diphosphate biosynthesis; geranylgeranyl diphosphate from farnesyl diphosphate and isopentenyl diphosphate: step 1/1. In terms of biological role, catalyzes the trans-addition of the three molecules of IPP onto DMAPP to form geranylgeranyl pyrophosphate. The chain is Geranylgeranyl pyrophosphate synthase 10, mitochondrial from Arabidopsis thaliana (Mouse-ear cress).